The following is a 263-amino-acid chain: 3-deoxy-manno-octulosonate cytidylyltransferase 2 (263 aa).

This sequence belongs to the KdsB family.

It is found in the cytoplasm. It carries out the reaction 3-deoxy-alpha-D-manno-oct-2-ulosonate + CTP = CMP-3-deoxy-beta-D-manno-octulosonate + diphosphate. Its pathway is nucleotide-sugar biosynthesis; CMP-3-deoxy-D-manno-octulosonate biosynthesis; CMP-3-deoxy-D-manno-octulosonate from 3-deoxy-D-manno-octulosonate and CTP: step 1/1. It functions in the pathway bacterial outer membrane biogenesis; lipopolysaccharide biosynthesis. Its function is as follows. Activates KDO (a required 8-carbon sugar) for incorporation into bacterial lipopolysaccharide in Gram-negative bacteria. In Paraburkholderia phytofirmans (strain DSM 17436 / LMG 22146 / PsJN) (Burkholderia phytofirmans), this protein is 3-deoxy-manno-octulosonate cytidylyltransferase 2.